Here is a 259-residue protein sequence, read N- to C-terminus: GTP-binding protein RHO4 (259 aa).

A GTP-binding site is contributed by 59 to 66; the sequence is GDGATGKT. The Effector region motif lies at 81–89; the sequence is YVPTIFENY. GTP contacts are provided by residues 107-111 and 165-168; these read DTAGQ and LKSD. C256 carries the cysteine methyl ester modification. C256 carries the S-geranylgeranyl cysteine lipid modification. Residues 257-259 constitute a propeptide, removed in mature form; the sequence is VVL.

It belongs to the small GTPase superfamily. Rho family.

It localises to the cell membrane. This is GTP-binding protein RHO4 (RHO4) from Eremothecium gossypii (strain ATCC 10895 / CBS 109.51 / FGSC 9923 / NRRL Y-1056) (Yeast).